Here is a 787-residue protein sequence, read N- to C-terminus: DNA ligase (787 aa).

Residues 32 to 36, 81 to 82, and Glu-121 contribute to the NAD(+) site; these read DVEYD and SL. The active-site N6-AMP-lysine intermediate is Lys-123. The NAD(+) site is built by Arg-144, Glu-181, Lys-297, and Lys-321. Cys-415, Cys-418, Cys-445, and Cys-451 together coordinate Zn(2+). The BRCT domain occupies 703-787; that stretch reads VEGLPLAGQT…RLIELGVAVD (85 aa).

It belongs to the NAD-dependent DNA ligase family. LigA subfamily. The cofactor is Mg(2+). Mn(2+) serves as cofactor.

The catalysed reaction is NAD(+) + (deoxyribonucleotide)n-3'-hydroxyl + 5'-phospho-(deoxyribonucleotide)m = (deoxyribonucleotide)n+m + AMP + beta-nicotinamide D-nucleotide.. Functionally, DNA ligase that catalyzes the formation of phosphodiester linkages between 5'-phosphoryl and 3'-hydroxyl groups in double-stranded DNA using NAD as a coenzyme and as the energy source for the reaction. It is essential for DNA replication and repair of damaged DNA. The polypeptide is DNA ligase (Pseudomonas syringae pv. syringae (strain B728a)).